We begin with the raw amino-acid sequence, 874 residues long: Probable inorganic carbon transporter subunit DabA (874 aa).

Positions 398, 400, 580, and 595 each coordinate Zn(2+).

This sequence belongs to the inorganic carbon transporter (TC 9.A.2) DabA family. As to quaternary structure, forms a complex with DabB. Zn(2+) serves as cofactor.

The protein resides in the cell membrane. In terms of biological role, part of an energy-coupled inorganic carbon pump. The sequence is that of Probable inorganic carbon transporter subunit DabA from Bacillus anthracis (strain A0248).